We begin with the raw amino-acid sequence, 344 residues long: tRNA N6-adenosine threonylcarbamoyltransferase (344 aa).

Fe cation is bound by residues H111 and H115. Residues 134-138 (LVSGG), D167, G180, and N273 each bind substrate. D301 serves as a coordination point for Fe cation.

This sequence belongs to the KAE1 / TsaD family. Fe(2+) is required as a cofactor.

The protein localises to the cytoplasm. It carries out the reaction L-threonylcarbamoyladenylate + adenosine(37) in tRNA = N(6)-L-threonylcarbamoyladenosine(37) in tRNA + AMP + H(+). Functionally, required for the formation of a threonylcarbamoyl group on adenosine at position 37 (t(6)A37) in tRNAs that read codons beginning with adenine. Is involved in the transfer of the threonylcarbamoyl moiety of threonylcarbamoyl-AMP (TC-AMP) to the N6 group of A37, together with TsaE and TsaB. TsaD likely plays a direct catalytic role in this reaction. The protein is tRNA N6-adenosine threonylcarbamoyltransferase of Cupriavidus necator (strain ATCC 17699 / DSM 428 / KCTC 22496 / NCIMB 10442 / H16 / Stanier 337) (Ralstonia eutropha).